Here is a 153-residue protein sequence, read N- to C-terminus: Endoribonuclease YbeY (153 aa).

Residues His-114, His-118, and His-124 each coordinate Zn(2+).

The protein belongs to the endoribonuclease YbeY family. Zn(2+) is required as a cofactor.

The protein resides in the cytoplasm. Functionally, single strand-specific metallo-endoribonuclease involved in late-stage 70S ribosome quality control and in maturation of the 3' terminus of the 16S rRNA. This is Endoribonuclease YbeY from Shewanella baltica (strain OS185).